The primary structure comprises 279 residues: tRNA uridine(34) hydroxylase (279 aa).

A Rhodanese domain is found at 126-221; the sequence is TKPGMHVIDT…YLQSVKGADS (96 aa). C181 acts as the Cysteine persulfide intermediate in catalysis.

The protein belongs to the TrhO family.

The catalysed reaction is uridine(34) in tRNA + AH2 + O2 = 5-hydroxyuridine(34) in tRNA + A + H2O. Catalyzes oxygen-dependent 5-hydroxyuridine (ho5U) modification at position 34 in tRNAs. This is tRNA uridine(34) hydroxylase from Anaplasma phagocytophilum (strain HZ).